The chain runs to 463 residues: Chitobiosyldiphosphodolichol beta-mannosyltransferase (463 aa).

Over 1 to 3 the chain is Lumenal; that stretch reads MKA. A helical transmembrane segment spans residues 4–24; sequence WHWSVTLVVIYLAIPVILYLL. The Cytoplasmic portion of the chain corresponds to 25–105; the sequence is TRKDDRKPLS…PLILNTRKLP (81 aa). The segment at residues 106–126 is an intramembrane region (helical); the sequence is FVVFGILKVIRQHWLLISLLY. Residues 127–463 lie on the Lumenal side of the membrane; sequence KLRGADYLLV…FSSSSSDDDH (337 aa).

Belongs to the glycosyltransferase group 1 family.

Its subcellular location is the endoplasmic reticulum membrane. The enzyme catalyses an N,N'-diacetylchitobiosyl-diphospho-di-trans,poly-cis-dolichol + GDP-alpha-D-mannose = a beta-D-Man-(1-&gt;4)-beta-D-GlcNAc-(1-&gt;4)-alpha-D-GlcNAc-diphospho-di-trans,poly-cis-dolichol + GDP + H(+). Its pathway is protein modification; protein glycosylation. Functionally, participates in the formation of the lipid-linked precursor oligosaccharide for N-glycosylation. Involved in assembling the dolichol-pyrophosphate-GlcNAc(2)-Man(5) intermediate on the cytoplasmic surface of the ER. In Yarrowia lipolytica (strain CLIB 122 / E 150) (Yeast), this protein is Chitobiosyldiphosphodolichol beta-mannosyltransferase (ALG1).